A 163-amino-acid polypeptide reads, in one-letter code: Ribonuclease H (163 aa).

The RNase H type-1 domain maps to 4-146; it reads SPKKVLIYTD…CDRLAVRASQ (143 aa). Mg(2+) is bound by residues D13, E51, D73, and D138.

This sequence belongs to the RNase H family. Monomer. It depends on Mg(2+) as a cofactor.

The protein resides in the cytoplasm. The catalysed reaction is Endonucleolytic cleavage to 5'-phosphomonoester.. Its function is as follows. Endonuclease that specifically degrades the RNA of RNA-DNA hybrids. In Rippkaea orientalis (strain PCC 8801 / RF-1) (Cyanothece sp. (strain PCC 8801)), this protein is Ribonuclease H.